Consider the following 279-residue polypeptide: uncharacterized protein (279 aa).

Transmembrane regions (helical) follow at residues 1–21 (MGFIKSTLLATVTVFVGLCGI), 38–58 (FACHTFLAISSAYGVIASVVA), and 131–151 (SLRYVPILGWFMILSDVVFID).

The protein belongs to the 1-acyl-sn-glycerol-3-phosphate acyltransferase family.

The protein localises to the endoplasmic reticulum membrane. This is an uncharacterized protein from Schizosaccharomyces pombe (strain 972 / ATCC 24843) (Fission yeast).